The primary structure comprises 750 residues: MFIRNVKLIKPSPVRFISPIPFSFPISRSIKISSIRYFTNKSTSNFKSTSSSSSLKSTSTSTSTSTSKTTPKTLSKPPPKVKPPIQDNDTTSSGSSSSENSESFMLKSLFKTIWPKNNLNFKIRVIIALSLLVGAKILNVQVPFYFKQIIDTMNIDWTNEVGVFSTVIGSLILAYGGARFGAVLFGELRNAIFASVAQSAIRRVAYNTFVKLLNMDLQFHLSRQTGGLTRAIDRGTKGISYVLSAMVFHIIPITLEISIVCGILTYNYGASFAAMTFVTMLAYSIFTIQTTAWRTKFRRQANNADNQAANVALDSLINYESVKIFNNELYQASKYDKALMKYQQSSVKIATSLAFLNSGQNFIFTSALTAMMYMGCQGVYTGELTVGDLVLINQLVFQLSVPLNFLGSVYRELKQSLLDMENLFQLQNQPIRIKEIPNAPPLKLNNNNNNNNNNNNNNNNSLPGEIRFENVSFGYHPDRPILNNASFTIPAGQKVAIVGPSGSGKSTILRLIFRFYDINQGRILIDGQDISKVSLESLRKLIGIVPQETPLFNDTILENIRYGRLDASDEEIYRVINQVQLNKLIDDLPDGVQTIVGERGMMISGGEKQRLAMARLLLKRAPITFFDEATSALDTHTEQALLKTIRSVFKQQHQTNVSIAHRLRTIADADKIIVLNKGQVVEEGTHWQLLNEQPNSLYAQLWNIQENLDIEKELLQGDEEEEELTEKLKLDKQELEQEAKLFNSQTFEKK.

Residues 1–16 (MFIRNVKLIKPSPVRF) constitute a mitochondrion transit peptide. The Mitochondrial matrix portion of the chain corresponds to 17 to 124 (ISPIPFSFPI…PKNNLNFKIR (108 aa)). 2 stretches are compositionally biased toward low complexity: residues 43-75 (TSNFKSTSSSSSLKSTSTSTSTSTSKTTPKTLS) and 87-100 (DNDTTSSGSSSSEN). Positions 43-100 (TSNFKSTSSSSSLKSTSTSTSTSTSKTTPKTLSKPPPKVKPPIQDNDTTSSGSSSSEN) are disordered. Residues 125–146 (VIIALSLLVGAKILNVQVPFYF) traverse the membrane as a helical segment. One can recognise an ABC transmembrane type-1 domain in the interval 125-415 (VIIALSLLVG…LGSVYRELKQ (291 aa)). The Mitochondrial intermembrane portion of the chain corresponds to 147-169 (KQIIDTMNIDWTNEVGVFSTVIG). Residues 170–193 (SLILAYGGARFGAVLFGELRNAIF) form a helical membrane-spanning segment. The Mitochondrial matrix portion of the chain corresponds to 194–242 (ASVAQSAIRRVAYNTFVKLLNMDLQFHLSRQTGGLTRAIDRGTKGISYV). Residues 243-266 (LSAMVFHIIPITLEISIVCGILTY) traverse the membrane as a helical segment. Residue Asn267 is a topological domain, mitochondrial intermembrane. A helical membrane pass occupies residues 268 to 288 (YGASFAAMTFVTMLAYSIFTI). Over 289-354 (QTTAWRTKFR…SSVKIATSLA (66 aa)) the chain is Mitochondrial matrix. Glutathione is bound by residues 294 to 298 (RTKFR) and 357 to 360 (NSGQ). The helical transmembrane segment at 355-373 (FLNSGQNFIFTSALTAMMY) threads the bilayer. Over 374–388 (MGCQGVYTGELTVGD) the chain is Mitochondrial intermembrane. The helical transmembrane segment at 389-410 (LVLINQLVFQLSVPLNFLGSVY) threads the bilayer. Position 407 (Gly407) interacts with glutathione. Over 411–750 (RELKQSLLDM…LFNSQTFEKK (340 aa)) the chain is Mitochondrial matrix. The interval 437-462 (PNAPPLKLNNNNNNNNNNNNNNNNSL) is disordered. Residues 445 to 460 (NNNNNNNNNNNNNNNN) are compositionally biased toward low complexity. The region spanning 466–702 (IRFENVSFGY…QPNSLYAQLW (237 aa)) is the ABC transporter domain. ATP is bound by residues Tyr475 and 499-510 (GPSGSGKSTILR).

This sequence belongs to the ABC transporter superfamily. ABCB family. Heavy Metal importer (TC 3.A.1.210) subfamily. Homodimer.

It is found in the mitochondrion inner membrane. Performs an essential function in the generation of cytoplasmic iron-sulfur proteins by mediating the ATP-dependent export of Fe/S cluster precursors synthesized by NFS1 and other mitochondrial proteins. Hydrolyzes ATP. Binds glutathione and may function by transporting a glutathione-conjugated iron-sulfur compound. This is Iron-sulfur clusters transporter ATM1, mitochondrial from Candida albicans (strain SC5314 / ATCC MYA-2876) (Yeast).